The chain runs to 420 residues: Dynein axonemal assembly factor 4 (420 aa).

In terms of domain architecture, CS spans 3–87 (LQVSDYSWQQ…KEAAMWETLS (85 aa)). Residues 7–103 (DYSWQQTKTA…ETMQRIREKS (97 aa)) form a mediates interaction with ESR1 and STUB1 region. TPR repeat units lie at residues 290 to 323 (PEWLKDKGNKLFATENYLAAINAYNLAIRLNNKM), 324 to 357 (PLLYLNRAACHLKLKNLHKAIEDSSKALELLMPP), and 366 to 399 (MKAHVRRGTAFCQLELYVEGLQDYEAALKIDPSN).

As to quaternary structure, interacts with ZMYND10. Interacts with STUB1. Interacts with ESR1 and ESR2. Interacts with DNAAF2. Interacts with CCT3, CCT4, CCT5 and CCT8. Interacts with DNAAF6/PIH1D3.

The protein resides in the nucleus. Its subcellular location is the cytoplasm. The protein localises to the cell projection. It is found in the neuron projection. It localises to the dynein axonemal particle. Functionally, involved in neuronal migration during development of the cerebral neocortex. May regulate the stability and proteasomal degradation of the estrogen receptors that play an important role in neuronal differentiation, survival and plasticity. Axonemal dynein assembly factor required for ciliary motility. This is Dynein axonemal assembly factor 4 from Pongo pygmaeus (Bornean orangutan).